We begin with the raw amino-acid sequence, 4069 residues long: Cardiomyopathy-associated protein 5 (4069 aa).

Disordered regions lie at residues 1–177 (MASR…SQVL), 341–387 (TVPS…DTPA), 442–525 (GLAA…EDSN), 538–558 (ESPLVSEKPFPPHMSPEVEHK), 597–705 (EYSV…VPSL), 732–793 (PSEE…RFTP), 844–872 (SSPDLVVASEHSFPPHTTEMTSECQAPPL), 890–948 (LERY…FSPD), 979–1009 (TSPSEHTILSDEDTEEAELFSPDSASQVSIP), 1041–1097 (ADEE…PEIP), 1160–1179 (VKEETKPASPHSVLPDSVPA), 1205–1237 (RKEEIVPDSQEATAHVSQDQKMEPQPPNVPESE), 1540–1575 (KETELPSSQNVSPASKHIIPKGKDEETASSSPELEN), 1594–1742 (PAVE…EEFQ), 1757–1809 (HPAD…ITEP), 1892–1988 (ENWM…VKLA), 2064–2175 (TISS…KKGI), 2187–2259 (FGSS…SGDG), 2385–2412 (PQQPKSASSNFASKNITKESEKPESIIL), 2425–2463 (SEDRLKKEMQNPTSLKISEEETKLRSVSPTEKKDNLENR), 2494–2527 (TQITLGSRSTELKESKADAMPQHFYQNEDYNERP), 2653–2706 (QEGN…VGTQ), and 2750–2862 (SSRD…SDVP). Residues 27 to 47 (ETEEESEGEEDETAAESEEEP) are compositionally biased toward acidic residues. Basic and acidic residues predominate over residues 48-62 (DSRLSDQDEEGKIKQ). A compositionally biased stretch (polar residues) spans 84–119 (TWETNSSRSSTPWASEESQTSGVCSREGSTVNSPPG). Positions 130–153 (KVRKRTHKSKHGSPSLRRKGNRKR) are enriched in basic residues. Phosphoserine is present on S155. Composition is skewed to polar residues over residues 156 to 177 (FESQDVPTNKKGSPLTSASQVL) and 341 to 350 (TVPSYSSSGR). Residues 489–499 (LEPSISLSEPL) are compositionally biased toward low complexity. Residues 500–510 (MLEEPEKEEIE) show a composition bias toward acidic residues. S631 carries the phosphoserine modification. A compositionally biased stretch (low complexity) spans 640 to 659 (AYSPAAAPTSESSLSPSTTE). Polar residues-rich tracts occupy residues 664–673 (NQSPLFSTVT), 692–701 (PDSTSASEYS), and 752–775 (PSLSPSTTEKTSECQSPLPSTATS). Polar residues predominate over residues 1049–1063 (TAATPVSEQFSSSQK). Over residues 1085–1094 (DKSEKAEIKP) the composition is skewed to basic and acidic residues. Residues 1214–1223 (QEATAHVSQD) show a composition bias toward polar residues. Basic and acidic residues predominate over residues 1621 to 1630 (EPEKKDKPHQ). Positions 1639–1662 (SEFSSDLGRQSGSIGTKQAKSPIT) are enriched in polar residues. Composition is skewed to basic and acidic residues over residues 1668–1687 (VLEKGPAELRSREGKEENRE), 1704–1714 (LREESQNEEIK), and 1786–1795 (ILDKLSEETG). Positions 1796–1808 (HPNSSQVLQSITE) are enriched in polar residues. Over residues 1935 to 1955 (SKDHTCEVRKQVLPHSAEESH) the composition is skewed to basic and acidic residues. Residues 1956–1980 (LSSQEAVSALDTSSGNTETLSSKSY) are compositionally biased toward polar residues. The span at 2085 to 2124 (NEKEAHRSTPPFPEEKPLEESKMVQSKVIDDADEGKKPSP) shows a compositional bias: basic and acidic residues. The segment covering 2145-2155 (SPESPEVTQNP) has biased composition (polar residues). Composition is skewed to basic and acidic residues over residues 2162–2172 (AKPDLPEEKGK) and 2232–2250 (KPADHSLSEVKLKTADEPR). Polar residues predominate over residues 2387-2399 (QPKSASSNFASKN). Phosphoserine is present on S2404. Residues 2441–2461 (ISEEETKLRSVSPTEKKDNLE) are compositionally biased toward basic and acidic residues. 3 stretches are compositionally biased toward basic and acidic residues: residues 2661 to 2681 (KSSRDMPDHSEEKEQFRESEL), 2750 to 2769 (SSRDMPDHSEEKEQFKESEL), and 2777 to 2804 (ITKESMKEGFPSKESERTLARPFDETKS). Position 2813 is a phosphoserine (S2813). Positions 2830-2847 (AVKKKEMPRSELTPERHT) are enriched in basic and acidic residues. Residues 2964 to 2988 (SIDQEESEQMQDKLEYLEEKASFKT) are a coiled coil. Residues 3015-3031 (PLKENKQKETHKTKEEI) show a composition bias toward basic and acidic residues. 5 disordered regions span residues 3015-3037 (PLKENKQKETHKTKEEISTDSET), 3119-3156 (EKGHNILSHPETQSQNSADRNVSKDTKRDVDSKSPGMP), 3204-3231 (KKKEEETASEGDSVNSEASFPSRNSDTD), 3386-3421 (SGATHVQETSLEEPKILVPPEPSEERLRNSPVQDEY), and 3465-3495 (EFASEAEQSTPAEQKELGSERKEEDQLSSEV). Positions 3052 to 3365 (YFEKYTLIDY…GSHGNEVGNA (314 aa)) are required for RYR2 clustering. Over residues 3128 to 3138 (PETQSQNSADR) the composition is skewed to polar residues. A compositionally biased stretch (basic and acidic residues) spans 3139–3150 (NVSKDTKRDVDS). A compositionally biased stretch (polar residues) spans 3213–3227 (EGDSVNSEASFPSRN). S3228 is subject to Phosphoserine. Positions 3477 to 3489 (EQKELGSERKEED) are enriched in basic and acidic residues. Residues 3517-3544 (KCPISATDKVFGTHKDHEVSTLDTAISA) form an amphipathic helix H1 region. Residues 3544-3653 (AVKVQLAEFL…REAEELDEAV (110 aa)) are a coiled coil. The tract at residues 3545–3672 (VKVQLAEFLE…ERLLSAMEST (128 aa)) is B-box coiled-coil; BBC. The tract at residues 3631–3648 (SMDTAKDTLETIVREAEE) is amphipathic helix H2. Fibronectin type-III domains lie at 3704–3805 (VPQP…TAPS) and 3806–3898 (TPVI…TRGT). The interval 3751–3767 (EVNELVEEYRLTVKESY) is amphipathic helix H3. The B30.2/SPRY domain maps to 3880-4065 (NAFGTSEQSE…LHLGIEPPDS (186 aa)).

In terms of assembly, interacts with PRKAR2A. Interacts with ACTN2 and DTNBP1/dysbindin. Interacts with DES. Interacts with DMD/dystrophin. Interacts with the calcineurin catalytic subunit PPP3CA. Interacts with TTN. Interacts with CAPN3; this interaction, which results in CMYA5 proteolysis, may protect CAPN3 from autolysis. Interacts with FSD2. Identified in a complex composed of FSD2, CMYA5 and RYR2. Post-translationally, phosphorylated by PKA. Expressed in skeletal muscle; at a strong level and in heart.

The protein localises to the nucleus. The protein resides in the sarcoplasmic reticulum. It localises to the cytoplasm. It is found in the perinuclear region. Its subcellular location is the myofibril. The protein localises to the sarcomere. The protein resides in the m line. May serve as an anchoring protein that mediates the subcellular compartmentation of protein kinase A (PKA) via binding to PRKAR2A. May function as a repressor of calcineurin-mediated transcriptional activity. May attenuate calcineurin ability to induce slow-fiber gene program in muscle and may negatively modulate skeletal muscle regeneration. Plays a role in the assembly of ryanodine receptor (RYR2) clusters in striated muscle. This is Cardiomyopathy-associated protein 5 (CMYA5) from Homo sapiens (Human).